The following is a 420-amino-acid chain: CinA-like protein (420 aa).

It belongs to the CinA family.

The sequence is that of CinA-like protein from Chloroherpeton thalassium (strain ATCC 35110 / GB-78).